Reading from the N-terminus, the 76-residue chain is Contulakin-G (76 aa).

An N-terminal signal peptide occupies residues 1-22 (MQTAYWVMVMMMVWIAAPLSEG). The propeptide occupies 23-50 (GKLNDVIRGLVPDDITPQLILGSLISRR). Gln-51 carries the post-translational modification Pyrrolidone carboxylic acid. A disordered region spans residues 51-76 (QSEEGGSNATKKPYILRASDQVASGP). The O-linked (GalNAc...) threonine glycan is linked to Thr-60. The propeptide occupies 67-76 (RASDQVASGP).

It belongs to the conotoxin C superfamily. In terms of processing, O-glycosylated. The glycosylation seems to enhance the affinity to the neurotensin receptors. As to expression, expressed by the venom duct.

It localises to the secreted. Functionally, acts as an agonist of neurotensin receptors. It binds to human neurotensin type 1 receptor (NTSR1), rat neurotensin types 1 and 2 receptors (NTSR1/NTSR2) and mouse neurotensin type 3 receptor (SORT1). In Conus geographus (Geography cone), this protein is Contulakin-G.